We begin with the raw amino-acid sequence, 470 residues long: Ribulose bisphosphate carboxylase large chain (470 aa).

Lys-5 is subject to N6,N6,N6-trimethyllysine. Asn-114 and Thr-164 together coordinate substrate. Lys-166 acts as the Proton acceptor in catalysis. Residue Lys-168 participates in substrate binding. Residues Lys-192, Asp-194, and Glu-195 each contribute to the Mg(2+) site. Position 192 is an N6-carboxylysine (Lys-192). His-285 serves as the catalytic Proton acceptor. Residues Arg-286, His-318, and Ser-370 each contribute to the substrate site.

Belongs to the RuBisCO large chain family. Type I subfamily. Heterohexadecamer of 8 large chains and 8 small chains; disulfide-linked. The disulfide link is formed within the large subunit homodimers. The cofactor is Mg(2+). Post-translationally, the disulfide bond which can form in the large chain dimeric partners within the hexadecamer appears to be associated with oxidative stress and protein turnover.

The protein localises to the plastid. Its subcellular location is the chloroplast. The catalysed reaction is 2 (2R)-3-phosphoglycerate + 2 H(+) = D-ribulose 1,5-bisphosphate + CO2 + H2O. The enzyme catalyses D-ribulose 1,5-bisphosphate + O2 = 2-phosphoglycolate + (2R)-3-phosphoglycerate + 2 H(+). Its function is as follows. RuBisCO catalyzes two reactions: the carboxylation of D-ribulose 1,5-bisphosphate, the primary event in carbon dioxide fixation, as well as the oxidative fragmentation of the pentose substrate in the photorespiration process. Both reactions occur simultaneously and in competition at the same active site. In Kigelia africana (Sausage tree), this protein is Ribulose bisphosphate carboxylase large chain.